A 211-amino-acid chain; its full sequence is Thymidylate kinase (211 aa).

Residue 11–18 (GPDGAGKT) participates in ATP binding.

The protein belongs to the thymidylate kinase family.

It carries out the reaction dTMP + ATP = dTDP + ADP. In terms of biological role, phosphorylation of dTMP to form dTDP in both de novo and salvage pathways of dTTP synthesis. This chain is Thymidylate kinase, found in Streptococcus equi subsp. zooepidemicus (strain H70).